We begin with the raw amino-acid sequence, 1517 residues long: DNA-directed RNA polymerase subunit beta' (1517 aa).

Zn(2+) is bound by residues cysteine 71, cysteine 73, cysteine 86, and cysteine 89. Mg(2+)-binding residues include aspartate 482, aspartate 484, and aspartate 486. Residues cysteine 812, cysteine 886, cysteine 893, and cysteine 896 each coordinate Zn(2+).

This sequence belongs to the RNA polymerase beta' chain family. The RNAP catalytic core consists of 2 alpha, 1 beta, 1 beta' and 1 omega subunit. When a sigma factor is associated with the core the holoenzyme is formed, which can initiate transcription. Mg(2+) is required as a cofactor. Zn(2+) serves as cofactor.

It carries out the reaction RNA(n) + a ribonucleoside 5'-triphosphate = RNA(n+1) + diphosphate. In terms of biological role, DNA-dependent RNA polymerase catalyzes the transcription of DNA into RNA using the four ribonucleoside triphosphates as substrates. The polypeptide is DNA-directed RNA polymerase subunit beta' (Campylobacter jejuni (strain RM1221)).